Consider the following 608-residue polypeptide: Glutamine--fructose-6-phosphate aminotransferase [isomerizing] (608 aa).

The active-site Nucleophile; for GATase activity is cysteine 2. A Glutamine amidotransferase type-2 domain is found at 2-217; that stretch reads CGIVGILGRG…DGDWAVLTRA (216 aa). 2 SIS domains span residues 284–423 and 456–598; these read LPFD…ERGK and LARY…VDQP. Lysine 603 (for Fru-6P isomerization activity) is an active-site residue.

Its subcellular location is the cytoplasm. The catalysed reaction is D-fructose 6-phosphate + L-glutamine = D-glucosamine 6-phosphate + L-glutamate. Its function is as follows. Involved in the production of the root hair deformation (HAD) factor specifically on soybean. In Bradyrhizobium diazoefficiens (strain JCM 10833 / BCRC 13528 / IAM 13628 / NBRC 14792 / USDA 110), this protein is Glutamine--fructose-6-phosphate aminotransferase [isomerizing] (nodM).